A 350-amino-acid polypeptide reads, in one-letter code: UDP-N-acetylenolpyruvoylglucosamine reductase (350 aa).

Residues 24–195 enclose the FAD-binding PCMH-type domain; the sequence is HVEATARWLL…VAVEFNLPLL (172 aa). The active site involves Arg172. Ser245 serves as the catalytic Proton donor. Glu342 is a catalytic residue.

The protein belongs to the MurB family. It depends on FAD as a cofactor.

The protein resides in the cytoplasm. It carries out the reaction UDP-N-acetyl-alpha-D-muramate + NADP(+) = UDP-N-acetyl-3-O-(1-carboxyvinyl)-alpha-D-glucosamine + NADPH + H(+). Its pathway is cell wall biogenesis; peptidoglycan biosynthesis. Functionally, cell wall formation. The polypeptide is UDP-N-acetylenolpyruvoylglucosamine reductase (Xanthomonas oryzae pv. oryzae (strain PXO99A)).